We begin with the raw amino-acid sequence, 363 residues long: Early boundary activity protein 1 (363 aa).

Residues 155-168 (MDQEPEHKQSHEQD) are compositionally biased toward basic and acidic residues. Positions 155–242 (MDQEPEHKQS…NAKRRCPGFE (88 aa)) are disordered. Acidic residues predominate over residues 198-209 (EDLGLDDDDEDY). The BEN domain occupies 255–354 (GPNGTEVSRI…TKCADENKML (100 aa)).

The heterotrimeric Elba complex consists of Elba1, Elba2 and Elba3.

The protein localises to the nucleus. Functionally, the heterotrimeric Elba complex is required for chromatin domain boundary function during early embryogenesis. It binds to a 8-bp sequence 5'-CCAATAAG-3' in the Fab-7 insulator or boundary element in the bithorax complex and contributes to its insulator or boundary activity. Elba1 may act as a transcriptional repressor and binds the palindromic sequence 5'-CCAATTGG-3' to mediate transcriptional repression. The sequence is that of Early boundary activity protein 1 from Drosophila melanogaster (Fruit fly).